Consider the following 271-residue polypeptide: Tryptophan synthase alpha chain (271 aa).

Catalysis depends on proton acceptor residues glutamate 49 and aspartate 60.

It belongs to the TrpA family. Tetramer of two alpha and two beta chains.

The enzyme catalyses (1S,2R)-1-C-(indol-3-yl)glycerol 3-phosphate + L-serine = D-glyceraldehyde 3-phosphate + L-tryptophan + H2O. Its pathway is amino-acid biosynthesis; L-tryptophan biosynthesis; L-tryptophan from chorismate: step 5/5. Functionally, the alpha subunit is responsible for the aldol cleavage of indoleglycerol phosphate to indole and glyceraldehyde 3-phosphate. The protein is Tryptophan synthase alpha chain of Paraburkholderia phymatum (strain DSM 17167 / CIP 108236 / LMG 21445 / STM815) (Burkholderia phymatum).